Here is a 238-residue protein sequence, read N- to C-terminus: CD63 antigen (238 aa).

The Cytoplasmic portion of the chain corresponds to 2–11; it reads AVEGGMKCVK. A helical membrane pass occupies residues 12-32; it reads FLLYVLLLAFCACAVGLIAVG. The Extracellular portion of the chain corresponds to 33-51; sequence VGAQLVLSQTIIQGATPGS. The helical transmembrane segment at 52-72 threads the bilayer; sequence LLPVVIIAVGVFLFLVAFVGC. At 73–81 the chain is on the cytoplasmic side; that stretch reads CGACKENYC. The chain crosses the membrane as a helical span at residues 82–102; it reads LMITFAIFLSLIMLVEVAAAI. The Extracellular segment spans residues 103–203; it reads AGYVFRDKVM…KIGGWLRKNV (101 aa). Asparagine 130, asparagine 150, and asparagine 172 each carry an N-linked (GlcNAc...) asparagine glycan. A helical membrane pass occupies residues 204-224; that stretch reads LVVAAAALGIAFVEVLGIVFA. Topologically, residues 225–238 are cytoplasmic; the sequence is CCLVKSIRSGYEVM. Residues 234–238 carry the Lysosomal targeting motif motif; it reads GYEVM.

Belongs to the tetraspanin (TM4SF) family. In terms of assembly, interacts with TIMP1 and ITGB1 and recruits TIMP1 to ITGB1. Interacts with CD9. Identified in a complex with CD9 and ITGB3. Interacts with PMEL. Interacts with KDR/VEGFR2; identified in a complex with ITGB1 and KDR/VEGFR2 and is required to recruit KDR to ITGB1 complexes. Interacts with SYT7. Palmitoylated at a low, basal level in unstimulated platelets. The level of palmitoylation increases when platelets are activated by thrombin (in vitro). In terms of tissue distribution, detected in platelets (at protein level). Dysplastic nevi, radial growth phase primary melanomas, hematopoietic cells, tissue macrophages.

The protein resides in the cell membrane. It is found in the lysosome membrane. The protein localises to the late endosome membrane. It localises to the endosome. Its subcellular location is the multivesicular body. The protein resides in the melanosome. It is found in the secreted. The protein localises to the extracellular exosome. It localises to the cell surface. Functionally, functions as a cell surface receptor for TIMP1 and plays a role in the activation of cellular signaling cascades. Plays a role in the activation of ITGB1 and integrin signaling, leading to the activation of AKT, FAK/PTK2 and MAP kinases. Promotes cell survival, reorganization of the actin cytoskeleton, cell adhesion, spreading and migration, via its role in the activation of AKT and FAK/PTK2. Plays a role in VEGFA signaling via its role in regulating the internalization of KDR/VEGFR2. Plays a role in intracellular vesicular transport processes, and is required for normal trafficking of the PMEL luminal domain that is essential for the development and maturation of melanocytes. Plays a role in the adhesion of leukocytes onto endothelial cells via its role in the regulation of SELP trafficking. May play a role in mast cell degranulation in response to Ms4a2/FceRI stimulation, but not in mast cell degranulation in response to other stimuli. The sequence is that of CD63 antigen (CD63) from Homo sapiens (Human).